A 430-amino-acid chain; its full sequence is Serine--tRNA ligase (430 aa).

L-serine is bound at residue 237 to 239; that stretch reads TAE. 268–270 contributes to the ATP binding site; the sequence is RSE. Position 291 (glutamate 291) interacts with L-serine. 355 to 358 lines the ATP pocket; it reads EISS. Serine 391 is an L-serine binding site.

This sequence belongs to the class-II aminoacyl-tRNA synthetase family. Type-1 seryl-tRNA synthetase subfamily. As to quaternary structure, homodimer. The tRNA molecule binds across the dimer.

The protein resides in the cytoplasm. The enzyme catalyses tRNA(Ser) + L-serine + ATP = L-seryl-tRNA(Ser) + AMP + diphosphate + H(+). It carries out the reaction tRNA(Sec) + L-serine + ATP = L-seryl-tRNA(Sec) + AMP + diphosphate + H(+). It participates in aminoacyl-tRNA biosynthesis; selenocysteinyl-tRNA(Sec) biosynthesis; L-seryl-tRNA(Sec) from L-serine and tRNA(Sec): step 1/1. Catalyzes the attachment of serine to tRNA(Ser). Is also able to aminoacylate tRNA(Sec) with serine, to form the misacylated tRNA L-seryl-tRNA(Sec), which will be further converted into selenocysteinyl-tRNA(Sec). In Salmonella enteritidis PT4 (strain P125109), this protein is Serine--tRNA ligase.